We begin with the raw amino-acid sequence, 334 residues long: Leukocyte cell-derived chemotaxin 1 (334 aa).

The helical transmembrane segment at 46–66 (VVLISGAVLLLFGAIGAFYFW) threads the bilayer. Positions 105–201 (GSGAEEAIEV…FCGDLPIFWL (97 aa)) constitute a BRICHOS domain. A disulfide bridge links Cys132 with Cys193. A propeptide spanning residues 211–214 (RERR) is cleaved from the precursor. The tract at residues 212-268 (ERREVVRSSAPSTTRRPHSEPRGNAGPGRLSNRTRPSVQDDEEPFNPDNPYHQQEGE) is disordered. Residue Asn243 is glycosylated (N-linked (GlcNAc...) asparagine). 4 disulfides stabilise this stretch: Cys282/Cys286, Cys283/Cys323, Cys293/Cys317, and Cys297/Cys313.

It belongs to the chondromodulin-1 family. Post-translationally, after cleavage, the post-translationally modified ChM-I is secreted as a glycoprotein. Detected in cartilage, cardiac valves and valvular interstitial cells (at protein level). Expressed in eye.

The protein localises to the secreted. It is found in the extracellular space. Its subcellular location is the extracellular matrix. The protein resides in the endomembrane system. Functionally, bifunctional growth regulator that stimulates the growth of cultured chondrocytes in the presence of basic fibroblast growth factor (FGF) but inhibits the growth of cultured vascular endothelial cells. May contribute to the rapid growth of cartilage and vascular invasion prior to the replacement of cartilage by bone during endochondral bone development. Inhibits in vitro tube formation and mobilization of endothelial cells. Plays a role as antiangiogenic factor in cardiac valves to suppress neovascularization. The sequence is that of Leukocyte cell-derived chemotaxin 1 from Rattus norvegicus (Rat).